Reading from the N-terminus, the 392-residue chain is Protein-glutamate methylesterase/protein-glutamine glutaminase (392 aa).

Residues 9-126 (TVLIVDDSPF…GADIQALARD (118 aa)) enclose the Response regulatory domain. Asp-60 carries the post-translational modification 4-aspartylphosphate. A disordered region spans residues 148–194 (VSRISSASGSRPPWTAGAASENTNRLSSPGSTSSTLGSAKGRSLDSG). The span at 173–185 (LSSPGSTSSTLGS) shows a compositional bias: low complexity. The CheB-type methylesterase domain occupies 198–392 (PKYPVEIVAI…RHIVECVQRR (195 aa)). Active-site residues include Ser-210, His-237, and Asp-334.

Belongs to the CheB family. Post-translationally, phosphorylated by CheA. Phosphorylation of the N-terminal regulatory domain activates the methylesterase activity.

The protein localises to the cytoplasm. It catalyses the reaction [protein]-L-glutamate 5-O-methyl ester + H2O = L-glutamyl-[protein] + methanol + H(+). The catalysed reaction is L-glutaminyl-[protein] + H2O = L-glutamyl-[protein] + NH4(+). Its function is as follows. Involved in chemotaxis. Part of a chemotaxis signal transduction system that modulates chemotaxis in response to various stimuli. Catalyzes the demethylation of specific methylglutamate residues introduced into the chemoreceptors (methyl-accepting chemotaxis proteins or MCP) by CheR. Also mediates the irreversible deamidation of specific glutamine residues to glutamic acid. This chain is Protein-glutamate methylesterase/protein-glutamine glutaminase, found in Desulfitobacterium hafniense (strain Y51).